We begin with the raw amino-acid sequence, 85 residues long: CDC42 small effector protein homolog (85 aa).

2 S-palmitoyl cysteine lipidation sites follow: Cys14 and Cys15. In terms of domain architecture, CRIB spans 37 to 50; it reads IGNPTNFVHTGHIG. A phosphoserine mark is found at Ser78 and Ser81.

This sequence belongs to the CDC42SE/SPEC family.

The protein resides in the cytoplasm. The protein localises to the cytoskeleton. Its subcellular location is the cell membrane. Its function is as follows. Probably involved in the organization of the actin cytoskeleton by acting downstream of CDC42, inducing actin filament assembly. This Drosophila melanogaster (Fruit fly) protein is CDC42 small effector protein homolog (Spec2).